A 287-amino-acid chain; its full sequence is N-methyltransferase verN (287 aa).

It belongs to the methyltransferase superfamily. LaeA methyltransferase family.

The protein operates within mycotoxin biosynthesis. N-methyltransferase; part of the gene cluster that mediates the biosynthesis of 11'-deoxyverticillin A, one of the dimeric epipolythiodioxopiperazines (ETPs) from the verticillin family that act as mycotoxins. 11'-deoxyverticillin A is required for normal conidiation. The nonribosomal peptide synthetase verP is speculated to be responsible for condensation of amino acids to form the carbon skeleton of verticillin, whereas the cluster-specific tailoring enzymes are involved in further modifications leading to the production of 11'-deoxyverticillin A. The sequence is that of N-methyltransferase verN from Clonostachys rogersoniana.